The primary structure comprises 411 residues: Anthranilate synthase component 1 (411 aa).

L-tryptophan contacts are provided by residues S27 and 203 to 205 (PYM). Position 237–238 (237–238 (GT)) interacts with chorismate. E262 contacts Mg(2+). Residues Y350, R369, 382 to 384 (GAG), and G384 each bind chorismate. Residue E397 coordinates Mg(2+).

This sequence belongs to the anthranilate synthase component I family. In terms of assembly, heterotetramer consisting of two non-identical subunits: a beta subunit (TrpG) and a large alpha subunit (TrpE). Requires Mg(2+) as cofactor.

It catalyses the reaction chorismate + L-glutamine = anthranilate + pyruvate + L-glutamate + H(+). The protein operates within amino-acid biosynthesis; L-tryptophan biosynthesis; L-tryptophan from chorismate: step 1/5. Its activity is regulated as follows. Feedback inhibited by tryptophan. Its function is as follows. Part of a heterotetrameric complex that catalyzes the two-step biosynthesis of anthranilate, an intermediate in the biosynthesis of L-tryptophan. In the first step, the glutamine-binding beta subunit (TrpG) of anthranilate synthase (AS) provides the glutamine amidotransferase activity which generates ammonia as a substrate that, along with chorismate, is used in the second step, catalyzed by the large alpha subunit of AS (TrpE) to produce anthranilate. In the absence of TrpG, TrpE can synthesize anthranilate directly from chorismate and high concentrations of ammonia. The polypeptide is Anthranilate synthase component 1 (trpE) (Archaeoglobus fulgidus (strain ATCC 49558 / DSM 4304 / JCM 9628 / NBRC 100126 / VC-16)).